Consider the following 23-residue polypeptide: Brevinin-1SE (23 aa).

Cys-17 and Cys-23 are joined by a disulfide.

As to expression, expressed by the skin glands.

It localises to the secreted. Functionally, mast cell degranulating peptide. Causes histamine release from rat peritoneal mast cells in vitro. Has antibacterial activity against the Gram-negative bacterium E.coli K12 and Gram-positive bacterium M.luteus NCT C2665. The protein is Brevinin-1SE of Lithobates sevosus (Dusky gopher frog).